Reading from the N-terminus, the 232-residue chain is Probable proteasome subunit alpha type-3 (232 aa).

Belongs to the peptidase T1A family. The 26S proteasome consists of a 20S proteasome core and two 19S regulatory subunits. The 20S proteasome core is composed of 28 subunits that are arranged in four stacked rings, resulting in a barrel-shaped structure. The two end rings are each formed by seven alpha subunits, and the two central rings are each formed by seven beta subunits. The catalytic chamber with the active sites is on the inside of the barrel.

Its subcellular location is the cytoplasm. It is found in the nucleus. The proteasome degrades poly-ubiquitinated proteins in the cytoplasm and in the nucleus. It is essential for the regulated turnover of proteins and for the removal of misfolded proteins. The proteasome is a multicatalytic proteinase complex that is characterized by its ability to cleave peptides with Arg, Phe, Tyr, Leu, and Glu adjacent to the leaving group at neutral or slightly basic pH. It has an ATP-dependent proteolytic activity. This Encephalitozoon cuniculi (strain GB-M1) (Microsporidian parasite) protein is Probable proteasome subunit alpha type-3 (PRE9).